The sequence spans 521 residues: CD166 antigen (521 aa).

At 1-465 (GSPVFIAFRS…NREKVNDQAK (465 aa)) the chain is on the extracellular side. N-linked (GlcNAc...) asparagine glycans are attached at residues Asn29, Asn33, Asn105, Asn203, Asn244, Asn299, Asn395, Asn418, and Asn437. The Ig-like V-type 2 domain occupies 63–172 (PTVVKVFKQP…YGPSGQKTVH (110 aa)). Cys95 and Cys158 form a disulfide bridge. 3 consecutive Ig-like C2-type domains span residues 183–266 (PTEQ…TAIT), 271–347 (DLSL…ESLT), and 354–439 (PQIK…LNVS). 3 disulfides stabilise this stretch: Cys208-Cys251, Cys292-Cys330, and Cys373-Cys423. Residues 466 to 487 (LIVGIVVGLLLAALVAGVVYWL) traverse the membrane as a helical segment. Topologically, residues 488-521 (YMKKSKTASKHVNKDLGNMEENKKLEENNHKTEA) are cytoplasmic. The segment at 500 to 521 (NKDLGNMEENKKLEENNHKTEA) is disordered. A compositionally biased stretch (basic and acidic residues) spans 507–521 (EENKKLEENNHKTEA).

Homodimer. Interacts (via extracellular domain) with CD6 (via extracellular domain). Homodimerization and interaction with CD6 involve the same region and cannot occur simultaneously. The affinity for CD6 is much higher than the affinity for self-association. Interacts (via glycosylated extracellular domain) with LGALS1 and LGALS3. Interaction with LGALS1 or LGALS3 inhibits interaction with CD6. Post-translationally, glycosylated.

Its subcellular location is the cell membrane. It localises to the cell projection. The protein localises to the axon. It is found in the dendrite. In terms of biological role, cell adhesion molecule that mediates both heterotypic cell-cell contacts via its interaction with CD6, as well as homotypic cell-cell contacts. Promotes T-cell activation and proliferation via its interactions with CD6. Contributes to the formation and maturation of the immunological synapse via its interactions with CD6. Mediates homotypic interactions with cells that express ALCAM. Mediates attachment of dendritic cells onto endothelial cells via homotypic interaction. Inhibits endothelial cell migration and promotes endothelial tube formation via homotypic interactions. Required for normal organization of the lymph vessel network. Required for normal hematopoietic stem cell engraftment in the bone marrow. Plays a role in hematopoiesis; required for normal numbers of hematopoietic stem cells in bone marrow. Promotes in vitro osteoblast proliferation and differentiation. Promotes neurite extension, axon growth and axon guidance; axons grow preferentially on surfaces that contain ALCAM. Mediates outgrowth and pathfinding for retinal ganglion cell axons. The polypeptide is CD166 antigen (ALCAM) (Oryctolagus cuniculus (Rabbit)).